The primary structure comprises 580 residues: MSFDQVIADALQALRSRFGADILSEQATGEGFPVLWLAAPAWEAAHRFLREEISAPFPLLADLWAIDESQRQHRAGQPASRLTLCSHLVSLERNADLRLKLATDGRAPSVAGVYANADWYEREAHDMFGLDFGRETRRLLMPPTWEGHPLLKTHYARATEKPPFVLTDRLFEAEERATITDPDLLGLPGLRDGEELMVLNFGPHHPSTHGVFRILLGLDGEEVVWAWPDIGYHHRGVEKMAERQTWHGFIPYCDRVDYLGGVISELPYLLAVERLCGIAVPPRAQMIRVMLCEFYRIMNHLLFYGTMAQDVGAMSPVFYMFTDREKGHEILNAITGARMHPAFFRIGGVAMDLPRGWDAMVRDFLDWMPGRLDEYERMVLRSELFRARTVGVGAYDTDTALTWGTTGPGLRATGCNWDLRKQRPYCGYEQFDFEVPLGQRGDIFDRTRVRADEMRESLKIIRQCLENMPEGAVKADHPLTTPPPRGAMQTDIETLIAHFLQSSWGTVVPAGEATGQIEGHRGLTQYAIVSDGGTQSYRTRIRTPSFAHLQMIPEIVPGMTVADLVAHIASIDFVMSDVDR.

Residues 1–171 (MSFDQVIADA…PPFVLTDRLF (171 aa)) are NADH dehydrogenase I subunit C. Residues 195 to 580 (ELMVLNFGPH…IDFVMSDVDR (386 aa)) are NADH dehydrogenase I subunit D.

The protein in the N-terminal section; belongs to the complex I 30 kDa subunit family. In the C-terminal section; belongs to the complex I 49 kDa subunit family. In terms of assembly, NDH-1 is composed of 13 different subunits. Subunits NuoB, CD, E, F, and G constitute the peripheral sector of the complex.

It localises to the cell inner membrane. It carries out the reaction a quinone + NADH + 5 H(+)(in) = a quinol + NAD(+) + 4 H(+)(out). Its function is as follows. NDH-1 shuttles electrons from NADH, via FMN and iron-sulfur (Fe-S) centers, to quinones in the respiratory chain. The immediate electron acceptor for the enzyme in this species is believed to be ubiquinone. Couples the redox reaction to proton translocation (for every two electrons transferred, four hydrogen ions are translocated across the cytoplasmic membrane), and thus conserves the redox energy in a proton gradient. The protein is NADH-quinone oxidoreductase subunit C/D of Cereibacter sphaeroides (strain ATCC 17025 / ATH 2.4.3) (Rhodobacter sphaeroides).